The following is a 475-amino-acid chain: Vasculin-like protein 1 (475 aa).

Phosphoserine occurs at positions 49 and 76. 2 disordered regions span residues 92 to 115 (NLSGWHGSSRGHDGMSQRAGGSTG) and 160 to 191 (PSLNPEAGKQNQPCRPIGTPSGVWENPPSAKQ). Position 202 is a phosphoserine (Ser202). Disordered regions lie at residues 237-271 (LVPKPAPPPSKPNAWKANRMEHKPGSLSSSREAAL) and 292-318 (PKESPSSTTPPIEISSSRLTKLTRRTT). Residues 294 to 311 (ESPSSTTPPIEISSSRLT) are compositionally biased toward low complexity. Position 300 is a phosphothreonine (Thr300). Ser383 is modified (phosphoserine). Residues 456–475 (CEDSDTETSSSETSDDDAWK) are disordered.

Belongs to the vasculin family.

The protein localises to the nucleus. Its function is as follows. Possible transcription factor. In Rattus norvegicus (Rat), this protein is Vasculin-like protein 1 (Gpbp1l1).